A 288-amino-acid chain; its full sequence is HTH-type transcriptional regulator CzcR (288 aa).

The region spanning 1-58 (MELRDLQIFQSVADQGSVSSAAKELNYVQSNVTARIKQLENELKTPLFYRHKRGMTLT) is the HTH lysR-type domain. Positions 18–37 (VSSAAKELNYVQSNVTARIK) form a DNA-binding region, H-T-H motif.

It belongs to the LysR transcriptional regulatory family.

In Bacillus anthracis, this protein is HTH-type transcriptional regulator CzcR (czcR).